Consider the following 94-residue polypeptide: DNA-directed RNA polymerase subunit omega (94 aa).

This sequence belongs to the RNA polymerase subunit omega family. In terms of assembly, the RNAP catalytic core consists of 2 alpha, 1 beta, 1 beta' and 1 omega subunit. When a sigma factor is associated with the core the holoenzyme is formed, which can initiate transcription.

The catalysed reaction is RNA(n) + a ribonucleoside 5'-triphosphate = RNA(n+1) + diphosphate. Its function is as follows. Promotes RNA polymerase assembly. Latches the N- and C-terminal regions of the beta' subunit thereby facilitating its interaction with the beta and alpha subunits. This is DNA-directed RNA polymerase subunit omega from Photobacterium profundum (strain SS9).